The sequence spans 178 residues: PRA1 family protein 2 (178 aa).

Over 1–41 (MSEVRLPPLRALDDFVLGSARLAAPDPCDPQRWCHRVINNL) the chain is Cytoplasmic. A helical transmembrane segment spans residues 42–62 (LYYQTNYLLCFGIGLALAGYV). Over 63 to 64 (RP) the chain is Extracellular. Residues 65–85 (LHTLLSALVVAVALGVLVWAA) traverse the membrane as a helical segment. At 86–96 (ETRAAVRRCRR) the chain is on the cytoplasmic side. The chain crosses the membrane as a helical span at residues 97 to 119 (SHPAACLAAVLAVGLLVLWVAGG). Residues 120-122 (ACT) lie on the Extracellular side of the membrane. A helical membrane pass occupies residues 123–140 (FLFSIAGPVLLILVHASL). Topologically, residues 141-178 (RLRNLKNKIENKIESIGLKRTPMGLLLEALGQEQEAGS) are cytoplasmic.

The protein belongs to the PRA1 family. As to quaternary structure, interacts with CCR5 and GDE1. As to expression, strong expression in the brain, small intestine, lung, spleen, and pancreas as well as in tumor tissues of the breast, colon, lung and ovary, with a weaker expression in normal tissues of the same patient. High expression in neuroblastic tumors. Strongly expressed in Purkinje cells and more moderately in cells of the molecular and the granular layers in the cerebellum. Detected in neuronal cells, but not in non-neuronal cells in the cerebral cortex, hippocampus, and lateral ventricles.

It localises to the endosome membrane. May be involved in ER/Golgi transport and vesicular traffic. Plays a proapoptotic role in cerulenin-induced neuroblastoma apoptosis. The protein is PRA1 family protein 2 (PRAF2) of Homo sapiens (Human).